Here is a 261-residue protein sequence, read N- to C-terminus: Pyridoxine 5'-phosphate synthase (261 aa).

A 3-amino-2-oxopropyl phosphate-binding site is contributed by N6. D8 to H9 is a binding site for 1-deoxy-D-xylulose 5-phosphate. R17 is a 3-amino-2-oxopropyl phosphate binding site. The active-site Proton acceptor is H42. Residues R44 and H49 each coordinate 1-deoxy-D-xylulose 5-phosphate. E69 serves as the catalytic Proton acceptor. T99 contacts 1-deoxy-D-xylulose 5-phosphate. H213 serves as the catalytic Proton donor. Residues G214 and G235–Q236 each bind 3-amino-2-oxopropyl phosphate.

It belongs to the PNP synthase family. In terms of assembly, homooctamer; tetramer of dimers.

The protein localises to the cytoplasm. It carries out the reaction 3-amino-2-oxopropyl phosphate + 1-deoxy-D-xylulose 5-phosphate = pyridoxine 5'-phosphate + phosphate + 2 H2O + H(+). Its pathway is cofactor biosynthesis; pyridoxine 5'-phosphate biosynthesis; pyridoxine 5'-phosphate from D-erythrose 4-phosphate: step 5/5. Its function is as follows. Catalyzes the complicated ring closure reaction between the two acyclic compounds 1-deoxy-D-xylulose-5-phosphate (DXP) and 3-amino-2-oxopropyl phosphate (1-amino-acetone-3-phosphate or AAP) to form pyridoxine 5'-phosphate (PNP) and inorganic phosphate. The polypeptide is Pyridoxine 5'-phosphate synthase (Aliarcobacter butzleri (strain RM4018) (Arcobacter butzleri)).